The following is an 80-amino-acid chain: UPF0291 protein LACR_1198 (80 aa).

It belongs to the UPF0291 family.

Its subcellular location is the cytoplasm. This chain is UPF0291 protein LACR_1198, found in Lactococcus lactis subsp. cremoris (strain SK11).